The sequence spans 448 residues: MSQPIQYLDVSENIPCSRCKTETAILISRKEKFCKDCFVRFIRGKQRKQMQDEKYKVKYGKNEENSPVQKVLLTLSCGVSSLVLVDVMTSLLKEQFDMHKGKQGFELVLLNINEYELKALDRSVKDVLEQLVQRFKPINITYKILSLESYVLDQSLLEKIVLNGDFTAYSQSIHHDRDYTLSEVLDLCPNKSSLEDLLTIIYDELILRTACLESCETILYGHSMTRIANEIIALTVKGRGSSIYQTVSDHSVNFRNKDYKIIFPLRDVLFAEILAYSKLSELDTFAVESTKPVSKITKNMTIRDLTTNYFNQLDATGYASTASTVVKTGDKLGAPKFEEDSSICQVCGTEIHQDPKEWLRRITVNKAAPLETEEEKEYAEQYKKASSLIEEPSSTQSKTPINICYGCTVTISGIKNESGFIWPIKYPANDEEREILNEYILTDDEDDQ.

Belongs to the CTU2/NCS2 family.

The protein resides in the cytoplasm. The protein operates within tRNA modification; 5-methoxycarbonylmethyl-2-thiouridine-tRNA biosynthesis. In terms of biological role, plays a central role in 2-thiolation of mcm(5)S(2)U at tRNA wobble positions of tRNA(Lys), tRNA(Glu) and tRNA(Gln). May act by forming a heterodimer with NCS6 that ligates sulfur from thiocarboxylated URM1 onto the uridine of tRNAs at wobble position. Prior mcm(5) tRNA modification by the elongator complex is required for 2-thiolation. May also be involved in protein urmylation. The chain is Cytoplasmic tRNA 2-thiolation protein 2 from Debaryomyces hansenii (strain ATCC 36239 / CBS 767 / BCRC 21394 / JCM 1990 / NBRC 0083 / IGC 2968) (Yeast).